The following is a 742-amino-acid chain: NAD(P)H-quinone oxidoreductase subunit 5, chloroplastic (742 aa).

A run of 16 helical transmembrane segments spans residues 9–29, 39–59, 91–111, 125–145, 147–167, 185–205, 224–244, 258–278, 280–300, 327–347, 354–374, 396–416, 425–445, 549–569, 603–623, and 721–741; these read WIIP…LLFF, IWAF…MKLA, PLTS…LIYS, FAYM…SNLI, IYIF…FWFT, GDFG…SFEF, LFCI…SAQF, TPIS…FLVA, LLPL…IGII, LGYM…FHLI, ALLF…VGYS, TSFL…CFWS, WVYS…TAFY, LFPL…GIPF, FVIN…IAFF, and ISSY…IFTF.

It belongs to the complex I subunit 5 family. In terms of assembly, NDH is composed of at least 16 different subunits, 5 of which are encoded in the nucleus.

It is found in the plastid. It localises to the chloroplast thylakoid membrane. The catalysed reaction is a plastoquinone + NADH + (n+1) H(+)(in) = a plastoquinol + NAD(+) + n H(+)(out). It catalyses the reaction a plastoquinone + NADPH + (n+1) H(+)(in) = a plastoquinol + NADP(+) + n H(+)(out). In terms of biological role, NDH shuttles electrons from NAD(P)H:plastoquinone, via FMN and iron-sulfur (Fe-S) centers, to quinones in the photosynthetic chain and possibly in a chloroplast respiratory chain. The immediate electron acceptor for the enzyme in this species is believed to be plastoquinone. Couples the redox reaction to proton translocation, and thus conserves the redox energy in a proton gradient. This is NAD(P)H-quinone oxidoreductase subunit 5, chloroplastic (ndhF) from Spinacia oleracea (Spinach).